Reading from the N-terminus, the 614-residue chain is Maltose permease MAL31 (614 aa).

Positions 1–48 are disordered; that stretch reads MKGLSSLINRKKDRNDSHLDEIENGVNATEFNSIEMEEQGKKSDFDLS. At 1-108 the chain is on the cytoplasmic side; it reads MKGLSSLINR…AAAWSLLVST (108 aa). Positions 38-48 are enriched in basic and acidic residues; it reads EQGKKSDFDLS. Residues 109-129 traverse the membrane as a helical segment; it reads TLIQEGYDTAILGAFYALPVF. Topologically, residues 130–144 are extracellular; sequence QKKYGSLNSNTGDYE. A helical membrane pass occupies residues 145 to 165; it reads ISVSWQIGLCLCYMAGEIVGL. Residues 166 to 180 are Cytoplasmic-facing; the sequence is QMTGPSVDYMGNRYT. Residues 181 to 201 form a helical membrane-spanning segment; that stretch reads LIMALFFLAAFIFILYFCKSL. Residue Gly-202 is a topological domain, extracellular. A helical membrane pass occupies residues 203–223; the sequence is MIAVGQALCGMPWGCFQCLTV. Residues 224–236 lie on the Cytoplasmic side of the membrane; the sequence is SYASEICPLALRY. A helical transmembrane segment spans residues 237–257; the sequence is YLTTYSNLCWAFGQLFAAGIM. The Extracellular portion of the chain corresponds to 258-272; sequence KNSQNKYANSELGYK. A helical membrane pass occupies residues 273–293; sequence LPFALQWIWPLPLAVGIFFAP. Residues 294 to 364 are Cytoplasmic-facing; that stretch reads ESPWWLVKKG…KDGINRRRTR (71 aa). Residues 365-385 form a helical membrane-spanning segment; the sequence is IACLCWIGQCSCGASLIGYST. Residues 386–398 are Extracellular-facing; that stretch reads YFYEKAGVSTDTA. The chain crosses the membrane as a helical span at residues 399–419; that stretch reads FTFSIIQYCLGIAATFISWWA. Residues 420–427 lie on the Cytoplasmic side of the membrane; that stretch reads SKYCGRFD. The helical transmembrane segment at 428–448 threads the bilayer; that stretch reads LYAFGLAFQAIMFFIIGGLGC. Residues 449–460 are Extracellular-facing; the sequence is SDTHGAKMGSGA. The chain crosses the membrane as a helical span at residues 461–481; it reads LLMVVAFFYNLGIAPVVFCLV. Over 482-493 the chain is Cytoplasmic; sequence SEIPSSRLRTKT. A helical transmembrane segment spans residues 494–514; the sequence is IILARNAYNVIQVVVTVLIMY. The Extracellular segment spans residues 515 to 526; that stretch reads QLNSEKWNWGAK. The chain crosses the membrane as a helical span at residues 527 to 547; it reads SGFFWGGFCLATLAWAVVDLP. Over 548–614 the chain is Cytoplasmic; the sequence is ETAGRTFIEI…GRNTSSVVNK (67 aa). The disordered stretch occupies residues 595-614; sequence EDLETSVVDEGRNTSSVVNK.

It belongs to the major facilitator superfamily. Sugar transporter (TC 2.A.1.1) family.

It is found in the membrane. Functionally, high-affinity uptake of maltose and maltotriose. Also transports turanose but not alpha-methylglucoside, melezitose or trehalose. In Saccharomyces cerevisiae (strain ATCC 204508 / S288c) (Baker's yeast), this protein is Maltose permease MAL31 (MAL31).